The following is a 311-amino-acid chain: Probable manganese-dependent inorganic pyrophosphatase (311 aa).

Residues H9, D13, D15, D75, H97, and D149 each contribute to the Mn(2+) site.

Belongs to the PPase class C family. Mn(2+) is required as a cofactor.

The protein resides in the cytoplasm. The catalysed reaction is diphosphate + H2O = 2 phosphate + H(+). The polypeptide is Probable manganese-dependent inorganic pyrophosphatase (Lactobacillus gasseri (strain ATCC 33323 / DSM 20243 / BCRC 14619 / CIP 102991 / JCM 1131 / KCTC 3163 / NCIMB 11718 / NCTC 13722 / AM63)).